Reading from the N-terminus, the 361-residue chain is Gibberellin 20 oxidase 1-D (361 aa).

Positions 199-299 (GNDSIMRLNY…RKSLAFFLCP (101 aa)) constitute a Fe2OG dioxygenase domain. Fe cation is bound by residues histidine 224, aspartate 226, and histidine 280. Arginine 290 is a catalytic residue.

The protein belongs to the iron/ascorbate-dependent oxidoreductase family. GA20OX subfamily. The cofactor is Fe cation. L-ascorbate is required as a cofactor. As to expression, expressed in nodes and the ear of the elongating stem.

It catalyses the reaction gibberellin A12 + 2 2-oxoglutarate + 3 O2 + H(+) = gibberellin A9 + 2 succinate + 3 CO2 + 2 H2O. It carries out the reaction gibberellin A53 + 2 2-oxoglutarate + 3 O2 + H(+) = gibberellin A20 + 2 succinate + 3 CO2 + 2 H2O. Key oxidase enzyme in the biosynthesis of gibberellin that catalyzes the conversion of GA12 and GA53 to GA9 and GA20 respectively, via a three-step oxidation at C-20 of the GA skeleton. The protein is Gibberellin 20 oxidase 1-D (GA20ox1D) of Triticum aestivum (Wheat).